Consider the following 214-residue polypeptide: ATP phosphoribosyltransferase (214 aa).

It belongs to the ATP phosphoribosyltransferase family. Short subfamily. Heteromultimer composed of HisG and HisZ subunits.

The protein localises to the cytoplasm. It carries out the reaction 1-(5-phospho-beta-D-ribosyl)-ATP + diphosphate = 5-phospho-alpha-D-ribose 1-diphosphate + ATP. It participates in amino-acid biosynthesis; L-histidine biosynthesis; L-histidine from 5-phospho-alpha-D-ribose 1-diphosphate: step 1/9. Catalyzes the condensation of ATP and 5-phosphoribose 1-diphosphate to form N'-(5'-phosphoribosyl)-ATP (PR-ATP). Has a crucial role in the pathway because the rate of histidine biosynthesis seems to be controlled primarily by regulation of HisG enzymatic activity. The sequence is that of ATP phosphoribosyltransferase from Leptothrix cholodnii (strain ATCC 51168 / LMG 8142 / SP-6) (Leptothrix discophora (strain SP-6)).